The primary structure comprises 219 residues: Thiopurine S-methyltransferase (219 aa).

Positions 10, 45, 66, and 130 each coordinate S-adenosyl-L-methionine.

The protein belongs to the class I-like SAM-binding methyltransferase superfamily. TPMT family.

The protein localises to the cytoplasm. It catalyses the reaction S-adenosyl-L-methionine + a thiopurine = S-adenosyl-L-homocysteine + a thiopurine S-methylether.. This chain is Thiopurine S-methyltransferase, found in Psychrobacter cryohalolentis (strain ATCC BAA-1226 / DSM 17306 / VKM B-2378 / K5).